Reading from the N-terminus, the 1408-residue chain is Palladin (1408 aa).

A disordered region spans residues 69–229 (SKSPISLCET…SASQSPTADQ (161 aa)). Composition is skewed to polar residues over residues 149 to 169 (PNPS…QSQL) and 193 to 229 (RSPN…TADQ). Ser194 is modified (phosphoserine). Ig-like C2-type domains follow at residues 278-367 (PRFI…AEVF) and 448-546 (PVFT…LVIT). 2 cysteine pairs are disulfide-bonded: Cys299-Cys351 and Cys469-Cys528. Residues 569-573 (FPPPP) are interaction with VASP. Disordered stretches follow at residues 631 to 660 (NGKA…LAKP) and 687 to 727 (PPGV…VPSE). The residue at position 639 (Ser639) is a Phosphoserine. Thr642 is modified (phosphothreonine). Ser648 carries the phosphoserine modification. The interval 653 to 683 (PPPLLAKPKLDPLKLQQLQNQVRLEQEACAW) is interaction with LASP1. The interval 683–713 (WPPAPPGVPCNSSSSGSSAPPSPPFPPPPPA) is interaction with SORBS2, SPIN90 and SRC. Residues 691–701 (PCNSSSSGSSA) show a composition bias toward low complexity. 3 positions are modified to phosphoserine: Ser700, Ser704, and Ser744. Positions 702–714 (PPSPPFPPPPPAF) are enriched in pro residues. Disordered stretches follow at residues 758–854 (NLGP…RFGP), 882–904 (KGVT…SDEE), and 960–981 (ETAA…LDGQ). Over residues 765–779 (LPTPTSSPSSSSLPS) the composition is skewed to low complexity. 3 stretches are compositionally biased toward pro residues: residues 780 to 797 (PLSP…PPFV), 807 to 818 (SPSPPPPPPPVF), and 828 to 840 (DVFP…PPLP). Residues 782 to 842 (SPTPRPFGRA…PPPPPPLPSS (61 aa)) form an interaction with EPS8 region. An interaction with SORBS2, SPIN90, SRC and PFN1 region spans residues 807–842 (SPSPPPPPPPVFSPSAAYPVPDVFPLPPPPPPLPSS). Positions 830–834 (FPLPP) are interaction with VASP. Ser901 bears the Phosphoserine mark. A phosphoserine mark is found at Ser1004 and Ser1009. In terms of domain architecture, Ig-like C2-type 3 spans 1026 to 1110 (PFFEMKLKHY…MAANPQGRVS (85 aa)). The segment at 1121-1150 (NQRGRSPRSPSGHPHARRPRSRSRDSGDEN) is disordered. Low complexity predominate over residues 1123-1133 (RGRSPRSPSGH). 4 positions are modified to phosphoserine: Ser1126, Ser1129, Ser1131, and Ser1141. The residue at position 1143 (Ser1143) is a Phosphoserine; by PKB/AKT1. Residue Ser1146 is modified to Phosphoserine. Ig-like C2-type domains are found at residues 1160-1251 (PHFL…LVVA) and 1259-1349 (PVFM…ARLD). 2 interaction with EZR regions span residues 1162 to 1251 (FLQA…LVVA) and 1261 to 1351 (FMEK…LDVY). Cys1181 and Cys1233 are disulfide-bonded. Ser1377 is modified (phosphoserine).

Belongs to the myotilin/palladin family. As to quaternary structure, interacts with EPS8. Interacts with LASP1. Interacts with VASP. Interacts with ACTN. Interacts with SORBS2. Interacts with PFN1. Interacts with LPP. Interacts with SPIN90. Interacts with SRC. Interacts with EZR. Interacts with RAI14. Phosphorylated predominantly on serines and, to a lesser extent, on tyrosines. Phosphorylation at Ser-1143 by PKB/AKT1 modulates cytoskeletal organization and cell motility. As to expression, detected in both muscle and non-muscle tissues and cells (at protein level). Isoform 3 is widely expressed, isoform 4 is particularly abundant in tissues rich in smooth muscle and in the cardiac muscle and isoform 1 is detected in heart.

It localises to the cytoplasm. Its subcellular location is the cytoskeleton. It is found in the cell junction. The protein resides in the focal adhesion. The protein localises to the myofibril. It localises to the sarcomere. Its subcellular location is the z line. It is found in the cell projection. The protein resides in the ruffle. The protein localises to the podosome. It localises to the lamellipodium. Its subcellular location is the axon. It is found in the growth cone. Cytoskeletal protein required for organization of normal actin cytoskeleton. Roles in establishing cell morphology, motility, cell adhesion and cell-extracellular matrix interactions in a variety of cell types. May function as a scaffolding molecule with the potential to influence both actin polymerization and the assembly of existing actin filaments into higher-order arrays. Binds to proteins that bind to either monomeric or filamentous actin. Localizes at sites where active actin remodeling takes place, such as lamellipodia and membrane ruffles. Different isoforms may have functional differences. Involved in the control of morphological and cytoskeletal changes associated with dendritic cell maturation. Involved in targeting ACTN to specific subcellular locations. May be required for the initiation of neural tube closure. In Mus musculus (Mouse), this protein is Palladin (Palld).